The following is a 55-amino-acid chain: MASSTDVRPKITLACEVCKHRNYITKKNRRNDPDRLELKKFCPNCGTHQSHRESK.

Belongs to the bacterial ribosomal protein bL33 family.

The sequence is that of Large ribosomal subunit protein bL33A from Rhodococcus jostii (strain RHA1).